Reading from the N-terminus, the 155-residue chain is MRKNAAPKRPIVKDPVYGSEVVTQLVNKVLLDGKKSTAERIVYGALDKCKEKTGIDPVLTLEKALGNIKPDLEVRSRRVGGATYQVPVEVRPARANTLALRWLVTFTRQRRENTMIERLANEILDAANGLGASVKRREDTHKMAEANRAFAHYRW.

The protein belongs to the universal ribosomal protein uS7 family. In terms of assembly, part of the 30S ribosomal subunit. Contacts proteins S9 and S11.

Functionally, one of the primary rRNA binding proteins, it binds directly to 16S rRNA where it nucleates assembly of the head domain of the 30S subunit. Is located at the subunit interface close to the decoding center, probably blocks exit of the E-site tRNA. The chain is Small ribosomal subunit protein uS7 from Corynebacterium diphtheriae (strain ATCC 700971 / NCTC 13129 / Biotype gravis).